The primary structure comprises 1150 residues: Alpha-mannosidase 2 (1150 aa).

Residues 1-5 (MKLSR) lie on the Cytoplasmic side of the membrane. Residues 6-26 (QFTVFGSAIFCVVIFSLYLML) form a helical; Signal-anchor for type II membrane protein membrane-spanning segment. The Lumenal segment spans residues 27 to 1150 (DRGHLDYPRG…STFRIRLRWT (1124 aa)). A glycan (N-linked (GlcNAc...) asparagine) is linked at Asn78. A phosphoserine mark is found at Ser80 and Ser82. N-linked (GlcNAc...) asparagine glycosylation is present at Asn93. Residues His174, Asp176, Asp288, and His568 each coordinate Zn(2+). Asp288 acts as the Nucleophile in catalysis. A glycan (N-linked (GlcNAc...) asparagine) is linked at Asn1129.

This sequence belongs to the glycosyl hydrolase 38 family. Homodimer; disulfide-linked. Zn(2+) is required as a cofactor. In terms of processing, glycosylated. In terms of tissue distribution, all tissues, mostly in adrenal and thymus.

The protein resides in the golgi apparatus membrane. The enzyme catalyses N(4)-{beta-D-GlcNAc-(1-&gt;2)-alpha-D-Man-(1-&gt;3)-[alpha-D-Man-(1-&gt;3)-[alpha-D-Man-(1-&gt;6)]-alpha-D-Man-(1-&gt;6)]-beta-D-Man-(1-&gt;4)-beta-D-GlcNAc-(1-&gt;4)-beta-D-GlcNAc}-L-asparaginyl-[protein] + 2 H2O = 2 alpha-D-mannopyranose + an N(4)-{beta-D-GlcNAc-(1-&gt;2)-alpha-D-Man-(1-&gt;3)-[alpha-D-Man-(1-&gt;6)]-beta-D-Man-(1-&gt;4)-beta-D-GlcNAc-(1-&gt;4)-beta-D-GlcNAc}-L-asparaginyl-[protein]. Its pathway is protein modification; protein glycosylation. Functionally, catalyzes the first committed step in the biosynthesis of complex N-glycans. It controls conversion of high mannose to complex N-glycans; the final hydrolytic step in the N-glycan maturation pathway. This chain is Alpha-mannosidase 2 (Man2a1), found in Mus musculus (Mouse).